The chain runs to 1040 residues: Myoblast growth factor receptor egl-15 (1040 aa).

Positions 1 to 19 are cleaved as a signal peptide; the sequence is MSYFLASCLGVGLLSTVSC. Residues 20 to 525 are Extracellular-facing; that stretch reads SLQGLTSHYR…PKIDRWTTSD (506 aa). The Ig-like C2-type 1 domain maps to 33–125; the sequence is PRFKHVANER…GQISRNFTVE (93 aa). The cysteines at positions 55 and 109 are disulfide-linked. N-linked (GlcNAc...) asparagine glycosylation occurs at Asn-121. Residues 234 to 257 show a composition bias toward basic and acidic residues; that stretch reads VHDSEESPSESRTEFINADEKENK. Residues 234–267 are disordered; it reads VHDSEESPSESRTEFINADEKENKEDEEEDYSVS. Asn-280 and Asn-299 each carry an N-linked (GlcNAc...) asparagine glycan. Ig-like C2-type domains lie at 287–383 and 391–501; these read PYFK…FHVI and PPII…ATLT. Cys-314 and Cys-367 form a disulfide bridge. 7 N-linked (GlcNAc...) asparagine glycosylation sites follow: Asn-401, Asn-407, Asn-433, Asn-440, Asn-449, Asn-474, and Asn-497. Cys-414 and Cys-485 are oxidised to a cystine. The chain crosses the membrane as a helical span at residues 526 to 549; it reads YIFTTILLFLLLAATLFGILFMVC. Residues 550-1040 are Cytoplasmic-facing; sequence KQTLHKKGFM…NNNSMSKPEF (491 aa). The Protein kinase domain occupies 640 to 931; the sequence is LSLVHMLGEG…KTIVDYLDWM (292 aa). Residues 646–654 and Lys-672 contribute to the ATP site; that span reads LGEGAFGEV. Asp-797 (proton acceptor) is an active-site residue. Tyr-828 bears the Phosphotyrosine; by autocatalysis mark. Disordered stretches follow at residues 952–984 and 1021–1040; these read ERSTASGPVSPMESFQKKRKHRPLSAPVNLPSE and TPETSQRIPSNNNSMSKPEF. Residues 1022 to 1040 are compositionally biased toward polar residues; sequence PETSQRIPSNNNSMSKPEF.

The protein belongs to the protein kinase superfamily. Tyr protein kinase family. Fibroblast growth factor receptor subfamily. It depends on Mg(2+) as a cofactor. Post-translationally, activity is regulated by the phosphatase clr-1, however it is not known whether clr-1 acts directly on egl-15.

The protein localises to the membrane. It carries out the reaction L-tyrosyl-[protein] + ATP = O-phospho-L-tyrosyl-[protein] + ADP + H(+). Its function is as follows. Receptor tyrosine kinase required for larval development. May phosphorylate adapter protein soc-1 which in turn may result in the recruitment and/or activation of phosphatase ptp-2. May activate the Ras/MAPK kinase signaling pathway which includes sem-5, sos-1, let-60/Ras, lin-45/Raf, mek-2 and mpk-1. Acts in the hypodermis to regulate axon growth and fluid homeostasis. Activates protein degradation in muscles. Probably following interaction with ligand let-756, negatively regulates membrane protrusion from body wall muscles during larval development. Plays a role in nicotinic acetylcholine receptor (nAChR)-mediated sensitivity to nicotine. Regulates synaptic levels of nAChR subunit lev-1 in the nerve cord. In terms of biological role, affects the maintenance of axon position without affecting axon growth. Interaction with egl-17 is required for the guidance of sex myoblast migration during gonad development. Interaction with let-756 appears to play a role in maintaining body morphology at higher temperatures. The protein is Myoblast growth factor receptor egl-15 (egl-15) of Caenorhabditis elegans.